The following is a 616-amino-acid chain: Homeodomain-interacting protein kinase 4 (616 aa).

The Protein kinase domain occupies 11-347; it reads YDIIEVLGKG…PSAALRHPFV (337 aa). Residues 17-25 and Lys40 contribute to the ATP site; that span reads LGKGTFGEV. The active-site Proton acceptor is Asp136. The interval 487–616 is disordered; it reads HKARKAPAGS…SFLQHVGGHH (130 aa). The span at 497 to 512 shows a compositional bias: polar residues; that stretch reads KSDSNFSNLIRLSQAS. Ser512 is subject to Phosphoserine. Basic and acidic residues predominate over residues 542–560; that stretch reads REGDGPGIKDRPMDAERPG.

Belongs to the protein kinase superfamily. CMGC Ser/Thr protein kinase family. HIPK subfamily. Autophosphorylated. As to expression, expressed at moderate levels in lung and white adipose tissues and weakly in brain and liver.

The protein localises to the cytoplasm. The enzyme catalyses L-seryl-[protein] + ATP = O-phospho-L-seryl-[protein] + ADP + H(+). It catalyses the reaction L-threonyl-[protein] + ATP = O-phospho-L-threonyl-[protein] + ADP + H(+). Its function is as follows. Protein kinase that phosphorylates murine TP53 at Ser-9, and thus induces TP53 repression of BIRC5 promoter. May act as a corepressor of transcription factors (Potential). The protein is Homeodomain-interacting protein kinase 4 (Hipk4) of Mus musculus (Mouse).